The primary structure comprises 614 residues: 1-deoxy-D-xylulose-5-phosphate synthase (614 aa).

Residues histidine 74 and 115–117 contribute to the thiamine diphosphate site; that span reads AHS. Aspartate 146 contacts Mg(2+). Residues 147 to 148, asparagine 175, tyrosine 282, and glutamate 363 each bind thiamine diphosphate; that span reads GA. Asparagine 175 contacts Mg(2+).

Belongs to the transketolase family. DXPS subfamily. In terms of assembly, homodimer. Mg(2+) serves as cofactor. Thiamine diphosphate is required as a cofactor.

It carries out the reaction D-glyceraldehyde 3-phosphate + pyruvate + H(+) = 1-deoxy-D-xylulose 5-phosphate + CO2. It participates in metabolic intermediate biosynthesis; 1-deoxy-D-xylulose 5-phosphate biosynthesis; 1-deoxy-D-xylulose 5-phosphate from D-glyceraldehyde 3-phosphate and pyruvate: step 1/1. Its function is as follows. Catalyzes the acyloin condensation reaction between C atoms 2 and 3 of pyruvate and glyceraldehyde 3-phosphate to yield 1-deoxy-D-xylulose-5-phosphate (DXP). The sequence is that of 1-deoxy-D-xylulose-5-phosphate synthase from Nitrosomonas eutropha (strain DSM 101675 / C91 / Nm57).